The sequence spans 134 residues: DNA-binding protein H-NS, plasmid (134 aa).

Residues 23 to 67 adopt a coiled-coil conformation; it reads LEILEELLEKLSVVVEERRQEESSKEAELKARLEKIESLRQLMLE. The segment at 77-96 is disordered; the sequence is SSFSAKSGAPKKVREPRPAK. Residues 112-117 mediate DNA binding; the sequence is QGRTPK.

The protein belongs to the histone-like protein H-NS family. As to quaternary structure, homodimer that oligomerizes on DNA into higher-order complexes that form bridges between disparate regions of DNA compacting it. Interacts with Hha, YdgT and StpA.

It is found in the cytoplasm. Its subcellular location is the nucleoid. In terms of biological role, a DNA-binding protein implicated in transcriptional repression and chromosome organization and compaction. Binds DNA, modifying gene expression, especially non-core genes. Does not regulate the same set of genes as its chromosomal counterpart (tested in S.typhimurium strain SL1344 / SV5015, chromosomal H-NS protein is AC A0A0H3NBY9). Thus it has a not-completely overlapping set of gene targets compared to its chromosomal homolog; many of these target genes are either plasmid-encoded or acquired by horizontally transferred genes (HTG). This protein can function in the absence of H-NS-modulating protein Hha (either chromosomal or plasmid-encoded), although many HTG genes are regulated by an H-NS/Hha complex. Binds nucleation sites in AT-rich DNA and bridges them, forming higher-order nucleoprotein complexes and condensing the chromosome. A subset of genes are repressed by H-NS in association with Hha and/or Cnu (ydgT). The protein is DNA-binding protein H-NS, plasmid (hns) of Salmonella typhi.